Reading from the N-terminus, the 483-residue chain is Alpha-tubulin N-acetyltransferase (483 aa).

Positions 1-186 (MEFRFNMHPL…NNFVVYEGFF (186 aa)) constitute an N-acetyltransferase domain. Acetyl-CoA-binding positions include 120-133 (FYVH…GLGR) and 156-165 (SEKLLGFLQK). Disordered stretches follow at residues 204–231 (TASP…QTRT), 330–395 (ETLP…VLGS), and 437–472 (SVKI…GGGH). Basic and acidic residues predominate over residues 347–369 (YDFHPHHLELHDDTEGGGSHRDQ). Over residues 370–383 (SLSPQSVSQQASPV) the composition is skewed to low complexity.

It belongs to the acetyltransferase ATAT1 family.

The enzyme catalyses L-lysyl-[alpha-tubulin] + acetyl-CoA = N(6)-acetyl-L-lysyl-[alpha-tubulin] + CoA + H(+). In terms of biological role, specifically acetylates 'Lys-40' in alpha-tubulin on the lumenal side of microtubules. Promotes microtubule destabilization and accelerates microtubule dynamics; this activity may be independent of acetylation activity. Acetylates alpha-tubulin with a slow enzymatic rate, due to a catalytic site that is not optimized for acetyl transfer. Enters the microtubule through each end and diffuses quickly throughout the lumen of microtubules. Acetylates only long/old microtubules because of its slow acetylation rate since it does not have time to act on dynamically unstable microtubules before the enzyme is released. This is Alpha-tubulin N-acetyltransferase from Anopheles gambiae (African malaria mosquito).